The following is a 308-amino-acid chain: Ribosomal RNA small subunit methyltransferase H (308 aa).

Residues 38 to 40 (GGH), aspartate 58, phenylalanine 82, aspartate 99, and glutamine 106 each bind S-adenosyl-L-methionine.

Belongs to the methyltransferase superfamily. RsmH family.

The protein resides in the cytoplasm. The enzyme catalyses cytidine(1402) in 16S rRNA + S-adenosyl-L-methionine = N(4)-methylcytidine(1402) in 16S rRNA + S-adenosyl-L-homocysteine + H(+). Its function is as follows. Specifically methylates the N4 position of cytidine in position 1402 (C1402) of 16S rRNA. The sequence is that of Ribosomal RNA small subunit methyltransferase H from Acidovorax ebreus (strain TPSY) (Diaphorobacter sp. (strain TPSY)).